Consider the following 681-residue polypeptide: Sodium-dependent phosphate transporter 1 (681 aa).

A run of 6 helical transmembrane segments spans residues 25–45 (NLWM…SVGA), 66–86 (ACIL…AKVS), 106–126 (LMAG…VASF), 162–182 (IVMS…ILFF), 201–221 (ALPI…MYTG), and 234–254 (GTIL…WFFV). Residues 266–295 (VKSSPSESPLMEKKNNLKDHEETKMAPGDV) are disordered. Residues S269 and S273 each carry the phosphoserine modification. A compositionally biased stretch (basic and acidic residues) spans 275–289 (LMEKKNNLKDHEETK). Helical transmembrane passes span 513–533 (VSLL…FAHG), 561–581 (ATPI…LWVW), 602–622 (FSIE…GLPI), and 652–672 (IFMA…AIMA).

It belongs to the inorganic phosphate transporter (PiT) (TC 2.A.20) family. In terms of tissue distribution, ubiquitously expressed.

The protein resides in the cell membrane. It carries out the reaction 2 Na(+)(out) + phosphate(out) = 2 Na(+)(in) + phosphate(in). Sodium-phosphate symporter which preferentially transports the monovalent form of phosphate with a stoichiometry of two sodium ions per phosphate ion. May play a role in extracellular matrix and cartilage calcification as well as in vascular calcification. Essential for cell proliferation but this function is independent of its phosphate transporter activity. This chain is Sodium-dependent phosphate transporter 1 (Slc20a1), found in Rattus norvegicus (Rat).